Consider the following 541-residue polypeptide: uncharacterized protein (541 aa).

Positions 1-17 (MSFSATILFSPPSGSEA) are cleaved as a signal peptide. Disordered stretches follow at residues 28–47 (TSQG…TPIT) and 103–138 (GKVC…SNSL). Residues 103-116 (GKVCTADEDRESRA) show a composition bias toward basic and acidic residues. Thr-118 carries the phosphothreonine modification. Glycyl lysine isopeptide (Lys-Gly) (interchain with G-Cter in SUMO2) cross-links involve residues Lys-128 and Lys-223. Ser-226 bears the Phosphoserine mark. Positions 232–243 (AIQRASSETGPE) are enriched in polar residues. The segment at 232–254 (AIQRASSETGPESGTKLPATRPE) is disordered. Phosphoserine occurs at positions 286 and 429. A disordered region spans residues 494 to 526 (YNPNFQEDEGGGNEKGPVSPSYDQPHKTSCPDL).

Its subcellular location is the secreted. This is an uncharacterized protein from Mus musculus (Mouse).